The sequence spans 113 residues: Large ribosomal subunit protein bL17 (113 aa).

This sequence belongs to the bacterial ribosomal protein bL17 family. In terms of assembly, part of the 50S ribosomal subunit. Contacts protein L32.

The chain is Large ribosomal subunit protein bL17 from Natranaerobius thermophilus (strain ATCC BAA-1301 / DSM 18059 / JW/NM-WN-LF).